A 158-amino-acid polypeptide reads, in one-letter code: Cystin-1 (158 aa).

Residues 1 to 146 form a disordered region; sequence MGSGSSRSSR…AAISYDHSEE (146 aa). G2 carries the N-myristoyl glycine lipid modification. Low complexity-rich tracts occupy residues 19–32 and 39–52; these read ESLP…ALEG and PVAA…AAEE. Residues 29–33 carry the Ciliary targeting motif motif; sequence ALEGG. Residues 65-75 show a composition bias toward basic and acidic residues; that stretch reads DGRDETLRLLD.

As to quaternary structure, interacts (when myristoylated) with UNC119 and UNC119B; interaction is required for localization to cilium. In terms of tissue distribution, expressed at high levels in the kidney and pancreas. Moderate expression seen in the skeletal muscle, liver and heart. A weak expression seen in the brain, lung, uterus, prostate, testis, small intestine and colon.

It is found in the cell projection. The protein resides in the cilium membrane. The protein localises to the cytoplasm. It localises to the cytoskeleton. Its subcellular location is the cilium axoneme. The chain is Cystin-1 (CYS1) from Homo sapiens (Human).